Consider the following 379-residue polypeptide: Homoserine O-succinyltransferase (379 aa).

Residues Asn-51–Leu-360 form the AB hydrolase-1 domain. Ser-157 functions as the Nucleophile in the catalytic mechanism. Arg-227 is a substrate binding site. Active-site residues include Asp-323 and His-356. Residue Asp-357 coordinates substrate.

The protein belongs to the AB hydrolase superfamily. MetX family. In terms of assembly, homodimer.

It is found in the cytoplasm. It carries out the reaction L-homoserine + succinyl-CoA = O-succinyl-L-homoserine + CoA. The protein operates within amino-acid biosynthesis; L-methionine biosynthesis via de novo pathway; O-succinyl-L-homoserine from L-homoserine: step 1/1. Its activity is regulated as follows. Requires MetW for activity. Its function is as follows. Transfers a succinyl group from succinyl-CoA to L-homoserine, forming succinyl-L-homoserine. The protein is Homoserine O-succinyltransferase of Pseudomonas putida (strain ATCC 47054 / DSM 6125 / CFBP 8728 / NCIMB 11950 / KT2440).